Reading from the N-terminus, the 377-residue chain is 23S rRNA (uracil(747)-C(5))-methyltransferase RlmC (377 aa).

Positions 3, 11, 14, and 87 each coordinate [4Fe-4S] cluster. Residues Gln212, Phe241, Glu262, and Asn307 each contribute to the S-adenosyl-L-methionine site. Cys334 serves as the catalytic Nucleophile.

This sequence belongs to the class I-like SAM-binding methyltransferase superfamily. RNA M5U methyltransferase family. RlmC subfamily.

It catalyses the reaction uridine(747) in 23S rRNA + S-adenosyl-L-methionine = 5-methyluridine(747) in 23S rRNA + S-adenosyl-L-homocysteine + H(+). Catalyzes the formation of 5-methyl-uridine at position 747 (m5U747) in 23S rRNA. The protein is 23S rRNA (uracil(747)-C(5))-methyltransferase RlmC of Edwardsiella ictaluri (strain 93-146).